We begin with the raw amino-acid sequence, 230 residues long: Endonuclease NucS (230 aa).

It belongs to the NucS endonuclease family.

The protein resides in the cytoplasm. Its function is as follows. Cleaves both 3' and 5' ssDNA extremities of branched DNA structures. In Corynebacterium aurimucosum (strain ATCC 700975 / DSM 44827 / CIP 107346 / CN-1) (Corynebacterium nigricans), this protein is Endonuclease NucS.